Here is a 181-residue protein sequence, read N- to C-terminus: MFGLKQFYQSEVRTKLAQELDIKNPMLLPKLEKIVISVGAGAHAKDMKIMQNIAQTISLIAGQKAVITKAKKSVAGFKIREGMAVGAKVTLRNKRMYNFLEKLIVISLPRVKDFRGISRNGFDGCGNYTFGINEQLIFPEVVYDDIMVSHGMNITMVTSTDNDKEAFKLLELLGLPFAKVR.

Belongs to the universal ribosomal protein uL5 family. Part of the 50S ribosomal subunit; part of the 5S rRNA/L5/L18/L25 subcomplex. Contacts the 5S rRNA and the P site tRNA. Forms a bridge to the 30S subunit in the 70S ribosome.

In terms of biological role, this is one of the proteins that bind and probably mediate the attachment of the 5S RNA into the large ribosomal subunit, where it forms part of the central protuberance. In the 70S ribosome it contacts protein S13 of the 30S subunit (bridge B1b), connecting the 2 subunits; this bridge is implicated in subunit movement. Contacts the P site tRNA; the 5S rRNA and some of its associated proteins might help stabilize positioning of ribosome-bound tRNAs. In Helicobacter pylori (strain ATCC 700392 / 26695) (Campylobacter pylori), this protein is Large ribosomal subunit protein uL5.